The following is a 569-amino-acid chain: Potassium-transporting ATPase potassium-binding subunit (569 aa).

10 consecutive transmembrane segments (helical) span residues 3 to 23 (LMEYTQLALFLGLLALMSPVL), 68 to 88 (AASLCAFSAAGFLMTFGVLML), 136 to 156 (VGLAYHNFVSAAAGLAVAVAV), 179 to 199 (VLYVLLPISLVLAVVLVGQGV), 259 to 279 (LQMLAIFIIPSSLVFTLGEAV), 284 to 304 (HAWTVWFVMACLFMVGTLSLY), 384 to 404 (GLYGMVLFILLTVFLAGLMVG), 422 to 442 (AMLALIIAATPPLLFSAVAAV), 490 to 510 (LALAMLIGRFGVMLPMLGVAG), and 534 to 554 (LLLTLVIVIVGALTYLPALAL).

The protein belongs to the KdpA family. In terms of assembly, the system is composed of three essential subunits: KdpA, KdpB and KdpC.

It localises to the cell inner membrane. In terms of biological role, part of the high-affinity ATP-driven potassium transport (or Kdp) system, which catalyzes the hydrolysis of ATP coupled with the electrogenic transport of potassium into the cytoplasm. This subunit binds the periplasmic potassium ions and delivers the ions to the membrane domain of KdpB through an intramembrane tunnel. The polypeptide is Potassium-transporting ATPase potassium-binding subunit (Nitratidesulfovibrio vulgaris (strain DP4) (Desulfovibrio vulgaris)).